A 250-amino-acid chain; its full sequence is Probable transcriptional regulatory protein SAV_6832 (250 aa).

It belongs to the TACO1 family.

It localises to the cytoplasm. The sequence is that of Probable transcriptional regulatory protein SAV_6832 from Streptomyces avermitilis (strain ATCC 31267 / DSM 46492 / JCM 5070 / NBRC 14893 / NCIMB 12804 / NRRL 8165 / MA-4680).